The chain runs to 528 residues: Bifunctional purine biosynthesis protein PurH (528 aa).

An MGS-like domain is found at 2-149 (TDLAPLRRAL…KNHGFVSVVV (148 aa)).

The protein belongs to the PurH family.

The catalysed reaction is (6R)-10-formyltetrahydrofolate + 5-amino-1-(5-phospho-beta-D-ribosyl)imidazole-4-carboxamide = 5-formamido-1-(5-phospho-D-ribosyl)imidazole-4-carboxamide + (6S)-5,6,7,8-tetrahydrofolate. The enzyme catalyses IMP + H2O = 5-formamido-1-(5-phospho-D-ribosyl)imidazole-4-carboxamide. It participates in purine metabolism; IMP biosynthesis via de novo pathway; 5-formamido-1-(5-phospho-D-ribosyl)imidazole-4-carboxamide from 5-amino-1-(5-phospho-D-ribosyl)imidazole-4-carboxamide (10-formyl THF route): step 1/1. The protein operates within purine metabolism; IMP biosynthesis via de novo pathway; IMP from 5-formamido-1-(5-phospho-D-ribosyl)imidazole-4-carboxamide: step 1/1. The protein is Bifunctional purine biosynthesis protein PurH of Roseobacter denitrificans (strain ATCC 33942 / OCh 114) (Erythrobacter sp. (strain OCh 114)).